A 355-amino-acid polypeptide reads, in one-letter code: 3-dehydroquinate synthase (355 aa).

Residues Glu-71–Lys-76, Gly-105–Asp-109, Thr-129–Ser-130, Lys-142, and Lys-151 each bind NAD(+). Zn(2+) is bound by residues Glu-184, His-246, and His-263.

It belongs to the sugar phosphate cyclases superfamily. Dehydroquinate synthase family. The cofactor is Co(2+). It depends on Zn(2+) as a cofactor. Requires NAD(+) as cofactor.

Its subcellular location is the cytoplasm. It catalyses the reaction 7-phospho-2-dehydro-3-deoxy-D-arabino-heptonate = 3-dehydroquinate + phosphate. The protein operates within metabolic intermediate biosynthesis; chorismate biosynthesis; chorismate from D-erythrose 4-phosphate and phosphoenolpyruvate: step 2/7. Functionally, catalyzes the conversion of 3-deoxy-D-arabino-heptulosonate 7-phosphate (DAHP) to dehydroquinate (DHQ). This is 3-dehydroquinate synthase from Streptococcus pneumoniae (strain JJA).